The primary structure comprises 413 residues: Porin PorA (413 aa).

The signal sequence occupies residues 1 to 22 (MKKVVSSLLIILGAAMLIFAIA). The interval 265 to 288 (TKSAADSKDDKKKDGDKKDEKSPE) is disordered.

Belongs to the PorA family.

It localises to the secreted. Its subcellular location is the cell wall. In terms of biological role, forms water-filled channels that favor the permeation of cations. The protein is Porin PorA of Corynebacterium resistens (strain DSM 45100 / JCM 12819 / GTC 2026 / SICGH 158).